Consider the following 466-residue polypeptide: tRNA modification GTPase MnmE (466 aa).

The (6S)-5-formyl-5,6,7,8-tetrahydrofolate site is built by R23, E86, and K125. One can recognise a TrmE-type G domain in the interval 221–388 (GIPVAIVGEP…LKNELLSFVN (168 aa)). N231 is a binding site for K(+). GTP-binding positions include 231 to 236 (NVGKST), 250 to 256 (SDIAGTT), and 275 to 278 (DTAG). Residue S235 coordinates Mg(2+). K(+) is bound by residues S250, I252, and T255. T256 contributes to the Mg(2+) binding site. K466 contributes to the (6S)-5-formyl-5,6,7,8-tetrahydrofolate binding site.

This sequence belongs to the TRAFAC class TrmE-Era-EngA-EngB-Septin-like GTPase superfamily. TrmE GTPase family. Homodimer. Heterotetramer of two MnmE and two MnmG subunits. The cofactor is K(+).

The protein resides in the cytoplasm. In terms of biological role, exhibits a very high intrinsic GTPase hydrolysis rate. Involved in the addition of a carboxymethylaminomethyl (cmnm) group at the wobble position (U34) of certain tRNAs, forming tRNA-cmnm(5)s(2)U34. The protein is tRNA modification GTPase MnmE of Flavobacterium johnsoniae (strain ATCC 17061 / DSM 2064 / JCM 8514 / BCRC 14874 / CCUG 350202 / NBRC 14942 / NCIMB 11054 / UW101) (Cytophaga johnsonae).